We begin with the raw amino-acid sequence, 93 residues long: Small integral membrane protein 36 (93 aa).

A helical transmembrane segment spans residues 14–34 (LIILVASYVILLLVFLVSCVL). Residues 70–93 (SHWARGPSLHLKDPAPLGKKSTVV) are disordered.

It localises to the membrane. The chain is Small integral membrane protein 36 from Mus musculus (Mouse).